The chain runs to 289 residues: Pantothenate synthetase (289 aa).

Residue 28–35 (MGCLHEGH) coordinates ATP. His35 acts as the Proton donor in catalysis. Gln59 is a (R)-pantoate binding site. Beta-alanine is bound at residue Gln59. 147 to 150 (GLKD) contacts ATP. Residue Gln153 participates in (R)-pantoate binding. ATP contacts are provided by residues Val176 and 184-187 (MSSR).

The protein belongs to the pantothenate synthetase family. As to quaternary structure, homodimer.

Its subcellular location is the cytoplasm. The enzyme catalyses (R)-pantoate + beta-alanine + ATP = (R)-pantothenate + AMP + diphosphate + H(+). The protein operates within cofactor biosynthesis; (R)-pantothenate biosynthesis; (R)-pantothenate from (R)-pantoate and beta-alanine: step 1/1. Catalyzes the condensation of pantoate with beta-alanine in an ATP-dependent reaction via a pantoyl-adenylate intermediate. The chain is Pantothenate synthetase from Magnetococcus marinus (strain ATCC BAA-1437 / JCM 17883 / MC-1).